The following is a 418-amino-acid chain: UDP-glucuronic acid decarboxylase 1 (418 aa).

At 1-17 (MMRMSWMVTVINRRMMK) the chain is on the cytoplasmic side. The chain crosses the membrane as a helical; Signal-anchor for type II membrane protein span at residues 18 to 38 (ILIALALIAYIASVWGTYANM). The Lumenal portion of the chain corresponds to 39–418 (RSIQEHGEMK…RMKKGRPRHN (380 aa)). Residues G96, F97, V98, D117, N118, F120, T121, G122, D142, and V143 each coordinate NAD(+). L147 and Y148 together coordinate UDP-alpha-D-glucuronate. Residues L157 and S159 each contribute to the NAD(+) site. Residue K175 coordinates UDP-alpha-D-glucuronate. Residue T176 participates in NAD(+) binding. Positions 183, 186, 189, and 190 each coordinate UDP-alpha-D-glucuronate. The NAD(+) site is built by A198, Y229, and K233. The active-site Proton acceptor is Y229. UDP-alpha-D-glucuronate is bound by residues Y243, Q246, and E247. NAD(+) is bound by residues T259, H265, and R270. Residues N314 and N383 are each glycosylated (N-linked (GlcNAc...) asparagine). Residues 397 to 418 (ANNQYIPKPKAARMKKGRPRHN) are disordered. Residues 406–418 (KAARMKKGRPRHN) are compositionally biased toward basic residues.

This sequence belongs to the NAD(P)-dependent epimerase/dehydratase family. UDP-glucuronic acid decarboxylase subfamily. In terms of assembly, homodimer and homotetramer. Requires NAD(+) as cofactor.

The protein localises to the golgi apparatus. The protein resides in the golgi stack membrane. The enzyme catalyses UDP-alpha-D-glucuronate + H(+) = UDP-alpha-D-xylose + CO2. It functions in the pathway nucleotide-sugar biosynthesis; UDP-alpha-D-xylose biosynthesis; UDP-alpha-D-xylose from UDP-alpha-D-glucuronate: step 1/1. Catalyzes the NAD-dependent decarboxylation of UDP-glucuronic acid to UDP-xylose. Necessary for the biosynthesis of the core tetrasaccharide in glycosaminoglycan biosynthesis. Essential during embryogenesis for craniofacial development. In Danio rerio (Zebrafish), this protein is UDP-glucuronic acid decarboxylase 1.